Consider the following 150-residue polypeptide: D-aminoacyl-tRNA deacylase (150 aa).

Residues 138–139 (GP) carry the Gly-cisPro motif, important for rejection of L-amino acids motif.

This sequence belongs to the DTD family. In terms of assembly, homodimer.

The protein resides in the cytoplasm. The catalysed reaction is glycyl-tRNA(Ala) + H2O = tRNA(Ala) + glycine + H(+). It carries out the reaction a D-aminoacyl-tRNA + H2O = a tRNA + a D-alpha-amino acid + H(+). Functionally, an aminoacyl-tRNA editing enzyme that deacylates mischarged D-aminoacyl-tRNAs. Also deacylates mischarged glycyl-tRNA(Ala), protecting cells against glycine mischarging by AlaRS. Acts via tRNA-based rather than protein-based catalysis; rejects L-amino acids rather than detecting D-amino acids in the active site. By recycling D-aminoacyl-tRNA to D-amino acids and free tRNA molecules, this enzyme counteracts the toxicity associated with the formation of D-aminoacyl-tRNA entities in vivo and helps enforce protein L-homochirality. This chain is D-aminoacyl-tRNA deacylase, found in Flavobacterium psychrophilum (strain ATCC 49511 / DSM 21280 / CIP 103535 / JIP02/86).